Reading from the N-terminus, the 1042-residue chain is Glutamate dehydrogenase 2 (1042 aa).

The active site involves Lys596. Position 763 is an ADP-ribosylarginine; by Legionella Lart1 (Arg763).

The protein belongs to the Glu/Leu/Phe/Val dehydrogenases family. Homodimer. (Microbial infection) ADP-ribosylated at Arg-763 by the Legionella pneumophila effector Lart1, which inhibits the glutamate dehydrogenase activity. Amoeba are natural hosts of Legionella, and ADP-ribosylation by Lart1 may promote Legionella parasitism.

Its subcellular location is the cytoplasm. It catalyses the reaction L-glutamate + NAD(+) + H2O = 2-oxoglutarate + NH4(+) + NADH + H(+). Its activity is regulated as follows. Activity is stimulated by AMP. With respect to regulation, (Microbial infection) Inhibited by ADP-ribosylation. This Dictyostelium discoideum (Social amoeba) protein is Glutamate dehydrogenase 2 (glud2).